A 542-amino-acid chain; its full sequence is Chaperonin GroEL (542 aa).

Residues T29–P32, D86–T90, G413, N477–A479, and D493 each bind ATP.

This sequence belongs to the chaperonin (HSP60) family. In terms of assembly, forms a cylinder of 14 subunits composed of two heptameric rings stacked back-to-back. Interacts with the co-chaperonin GroES.

The protein localises to the cytoplasm. It catalyses the reaction ATP + H2O + a folded polypeptide = ADP + phosphate + an unfolded polypeptide.. Functionally, together with its co-chaperonin GroES, plays an essential role in assisting protein folding. The GroEL-GroES system forms a nano-cage that allows encapsulation of the non-native substrate proteins and provides a physical environment optimized to promote and accelerate protein folding. This is Chaperonin GroEL from Lactobacillus acidophilus (strain ATCC 700396 / NCK56 / N2 / NCFM).